A 433-amino-acid polypeptide reads, in one-letter code: Probable beta-1,3-galactosyl-O-glycosyl-glycoprotein beta-1,6-N-acetylglucosaminyltransferase 7 (433 aa).

The Cytoplasmic segment spans residues Met-1 to Lys-8. Residues Ala-9 to Leu-25 traverse the membrane as a helical; Signal-anchor for type II membrane protein segment. Residues Arg-26–His-433 lie on the Extracellular side of the membrane. 4 cysteine pairs are disulfide-bonded: Cys-57/Cys-209, Cys-143/Cys-358, Cys-164/Cys-191, and Cys-367/Cys-398. Asn-112 is a glycosylation site (N-linked (GlcNAc...) asparagine). A disordered region spans residues Asn-233 to His-275. Residues Asp-258 to His-275 show a composition bias toward polar residues. Positions Val-413–His-433 are disordered. Residues Phe-421 to His-433 are compositionally biased toward polar residues.

The protein belongs to the glycosyltransferase 14 family.

Its subcellular location is the golgi apparatus membrane. Its pathway is protein modification; protein glycosylation. In terms of biological role, probable glycosyltransferase. This is Probable beta-1,3-galactosyl-O-glycosyl-glycoprotein beta-1,6-N-acetylglucosaminyltransferase 7 from Mus musculus (Mouse).